The sequence spans 306 residues: Pantothenate kinase (306 aa).

ATP is bound at residue 91 to 98; that stretch reads GSVAVGKS.

It belongs to the prokaryotic pantothenate kinase family.

The protein localises to the cytoplasm. It catalyses the reaction (R)-pantothenate + ATP = (R)-4'-phosphopantothenate + ADP + H(+). Its pathway is cofactor biosynthesis; coenzyme A biosynthesis; CoA from (R)-pantothenate: step 1/5. The chain is Pantothenate kinase from Streptococcus mutans serotype c (strain ATCC 700610 / UA159).